Reading from the N-terminus, the 35-residue chain is Beta-amanitin proprotein (35 aa).

Residues M1 to P10 constitute a propeptide that is removed on maturation. A cross-link (cyclopeptide (Ile-Pro)) is located at residues I11–P18. The 2'-cysteinyl-6'-hydroxytryptophan sulfoxide (Trp-Cys) cross-link spans W12 to C16. Residues C19–C35 constitute a propeptide that is removed on maturation.

It belongs to the MSDIN fungal toxin family. In terms of processing, processed by the macrocyclase-peptidase enzyme POPB to yield a toxic cyclic octapeptide. POPB first removes 10 residues from the N-terminus. Conformational trapping of the remaining peptide forces the enzyme to release this intermediate rather than proceed to macrocyclization. The enzyme rebinds the remaining peptide in a different conformation and catalyzes macrocyclization of the N-terminal 8 residues. Expressed in basidiocarps.

Functionally, toxin belonging to the bicyclic octapeptides amatoxins that acts by binding non-competitively to RNA polymerase II and greatly slowing the elongation of transcripts from target promoters. The protein is Beta-amanitin proprotein of Amanita exitialis (Guangzhou destroying angel).